The sequence spans 303 residues: Nucleotide-binding protein USA300HOU_0794 (303 aa).

18-25 provides a ligand contact to ATP; it reads GLSGAGKS. 69–72 lines the GTP pocket; the sequence is DLRG.

It belongs to the RapZ-like family.

Displays ATPase and GTPase activities. This chain is Nucleotide-binding protein USA300HOU_0794, found in Staphylococcus aureus (strain USA300 / TCH1516).